The sequence spans 51 residues: uncharacterized protein (51 aa).

It to E.coli YdfA.

This is an uncharacterized protein from Escherichia coli O157:H7.